Here is a 219-residue protein sequence, read N- to C-terminus: Phosphatidylserine decarboxylase proenzyme (219 aa).

Ser-188 acts as the Schiff-base intermediate with substrate; via pyruvic acid in catalysis. The residue at position 188 (Ser-188) is a Pyruvic acid (Ser); by autocatalysis.

It belongs to the phosphatidylserine decarboxylase family. PSD-A subfamily. As to quaternary structure, heterodimer of a large membrane-associated beta subunit and a small pyruvoyl-containing alpha subunit. It depends on pyruvate as a cofactor. Post-translationally, is synthesized initially as an inactive proenzyme. Formation of the active enzyme involves a self-maturation process in which the active site pyruvoyl group is generated from an internal serine residue via an autocatalytic post-translational modification. Two non-identical subunits are generated from the proenzyme in this reaction, and the pyruvate is formed at the N-terminus of the alpha chain, which is derived from the carboxyl end of the proenzyme. The post-translation cleavage follows an unusual pathway, termed non-hydrolytic serinolysis, in which the side chain hydroxyl group of the serine supplies its oxygen atom to form the C-terminus of the beta chain, while the remainder of the serine residue undergoes an oxidative deamination to produce ammonia and the pyruvoyl prosthetic group on the alpha chain.

The protein resides in the cell membrane. The enzyme catalyses a 1,2-diacyl-sn-glycero-3-phospho-L-serine + H(+) = a 1,2-diacyl-sn-glycero-3-phosphoethanolamine + CO2. It participates in phospholipid metabolism; phosphatidylethanolamine biosynthesis; phosphatidylethanolamine from CDP-diacylglycerol: step 2/2. Its function is as follows. Catalyzes the formation of phosphatidylethanolamine (PtdEtn) from phosphatidylserine (PtdSer). This is Phosphatidylserine decarboxylase proenzyme from Geobacter sp. (strain M21).